Here is a 331-residue protein sequence, read N- to C-terminus: Holliday junction branch migration complex subunit RuvB (331 aa).

The tract at residues 1 to 171 (MTEPLDAALR…FGIIEHLEYY (171 aa)) is large ATPase domain (RuvB-L). Residues Leu-9, Arg-10, Gly-51, Lys-54, Thr-55, Thr-56, 118–120 (EDF), Arg-161, Tyr-171, and Arg-208 contribute to the ATP site. Thr-55 lines the Mg(2+) pocket. The segment at 172–242 (TPEEIGTNLL…RAQDALDKLG (71 aa)) is small ATPAse domain (RuvB-S). The interval 245-331 (TAGLDERDKK…AESDLGLYTN (87 aa)) is head domain (RuvB-H). Residues Arg-300 and Arg-305 each contribute to the DNA site.

The protein belongs to the RuvB family. As to quaternary structure, homohexamer. Forms an RuvA(8)-RuvB(12)-Holliday junction (HJ) complex. HJ DNA is sandwiched between 2 RuvA tetramers; dsDNA enters through RuvA and exits via RuvB. An RuvB hexamer assembles on each DNA strand where it exits the tetramer. Each RuvB hexamer is contacted by two RuvA subunits (via domain III) on 2 adjacent RuvB subunits; this complex drives branch migration. In the full resolvosome a probable DNA-RuvA(4)-RuvB(12)-RuvC(2) complex forms which resolves the HJ.

It localises to the cytoplasm. It carries out the reaction ATP + H2O = ADP + phosphate + H(+). Functionally, the RuvA-RuvB-RuvC complex processes Holliday junction (HJ) DNA during genetic recombination and DNA repair, while the RuvA-RuvB complex plays an important role in the rescue of blocked DNA replication forks via replication fork reversal (RFR). RuvA specifically binds to HJ cruciform DNA, conferring on it an open structure. The RuvB hexamer acts as an ATP-dependent pump, pulling dsDNA into and through the RuvAB complex. RuvB forms 2 homohexamers on either side of HJ DNA bound by 1 or 2 RuvA tetramers; 4 subunits per hexamer contact DNA at a time. Coordinated motions by a converter formed by DNA-disengaged RuvB subunits stimulates ATP hydrolysis and nucleotide exchange. Immobilization of the converter enables RuvB to convert the ATP-contained energy into a lever motion, pulling 2 nucleotides of DNA out of the RuvA tetramer per ATP hydrolyzed, thus driving DNA branch migration. The RuvB motors rotate together with the DNA substrate, which together with the progressing nucleotide cycle form the mechanistic basis for DNA recombination by continuous HJ branch migration. Branch migration allows RuvC to scan DNA until it finds its consensus sequence, where it cleaves and resolves cruciform DNA. The protein is Holliday junction branch migration complex subunit RuvB of Deinococcus geothermalis (strain DSM 11300 / CIP 105573 / AG-3a).